The primary structure comprises 142 residues: Hemoglobin subunit theta-1 (142 aa).

The Globin domain occupies Ala-2–Arg-142. Residues His-59 and His-88 each coordinate heme b.

The protein belongs to the globin family.

The protein is Hemoglobin subunit theta-1 (HBQ1) of Pongo pygmaeus (Bornean orangutan).